The primary structure comprises 216 residues: Probable ubiquitin-conjugating enzyme E2 ECU01_1010 (216 aa).

Basic residues predominate over residues 1–10 (MFKPSAHRRL). Residues 1-29 (MFKPSAHRRLPREDDIIQEDDEDGPLWPS) form a disordered region. In terms of domain architecture, UBC core spans 29–196 (SALRRLSNEE…VIRIAREEDE (168 aa)). C120 (glycyl thioester intermediate) is an active-site residue.

The protein belongs to the ubiquitin-conjugating enzyme family.

The enzyme catalyses S-ubiquitinyl-[E1 ubiquitin-activating enzyme]-L-cysteine + [E2 ubiquitin-conjugating enzyme]-L-cysteine = [E1 ubiquitin-activating enzyme]-L-cysteine + S-ubiquitinyl-[E2 ubiquitin-conjugating enzyme]-L-cysteine.. It functions in the pathway protein modification; protein ubiquitination. In terms of biological role, catalyzes the covalent attachment of ubiquitin to other proteins so as to signal them for selective protein degradation. Involved in the formation of multiubiquitin chains. The polypeptide is Probable ubiquitin-conjugating enzyme E2 ECU01_1010 (Encephalitozoon cuniculi (strain GB-M1) (Microsporidian parasite)).